A 450-amino-acid polypeptide reads, in one-letter code: Glucose-6-phosphate isomerase (450 aa).

Catalysis depends on E290, which acts as the Proton donor. Catalysis depends on residues H311 and K425.

It belongs to the GPI family.

It localises to the cytoplasm. It carries out the reaction alpha-D-glucose 6-phosphate = beta-D-fructose 6-phosphate. It participates in carbohydrate biosynthesis; gluconeogenesis. It functions in the pathway carbohydrate degradation; glycolysis; D-glyceraldehyde 3-phosphate and glycerone phosphate from D-glucose: step 2/4. Functionally, catalyzes the reversible isomerization of glucose-6-phosphate to fructose-6-phosphate. The sequence is that of Glucose-6-phosphate isomerase from Listeria monocytogenes serovar 1/2a (strain ATCC BAA-679 / EGD-e).